The sequence spans 45 residues: Toxin Bcs III 15.09 (45 aa).

The region spanning 2–44 (QGTACTGEHAHNFCLNGGTCRHIQSLGEYYCICPEGYTGHRCE) is the EGF-like domain. Disulfide bonds link Cys-6-Cys-21, Cys-15-Cys-32, and Cys-34-Cys-43.

It is found in the secreted. It localises to the nematocyst. Its function is as follows. Has both toxic and EGF activity. This chain is Toxin Bcs III 15.09, found in Bunodosoma caissarum (Sea anemone).